The chain runs to 159 residues: Neurotrophin-3 (159 aa).

Positions 1-3 (IQS) are cleaved as a signal peptide. A propeptide spanning residues 4-115 (TSMDQGILTE…VQNRTSRRKR (112 aa)) is cleaved from the precursor. Positions 91-129 (APLEPPPLYLTEEPLVQNRTSRRKREGKRHRGEYSVCDS) are disordered. Asn-108 carries N-linked (GlcNAc...) asparagine glycosylation. Over residues 110-121 (TSRRKREGKRHR) the composition is skewed to basic residues.

Belongs to the NGF-beta family.

It localises to the secreted. Seems to promote the survival of visceral and proprioceptive sensory neurons. The sequence is that of Neurotrophin-3 (NTF3) from Candoia carinata (Papuan tree boa).